The following is a 213-amino-acid chain: Protein Syd (213 aa).

The protein belongs to the Syd family.

It is found in the cell inner membrane. Its function is as follows. Interacts with the SecY protein in vivo. May bind preferentially to an uncomplexed state of SecY, thus functioning either as a chelating agent for excess SecY in the cell or as a regulatory factor that negatively controls the translocase function. This is Protein Syd from Shewanella pealeana (strain ATCC 700345 / ANG-SQ1).